The sequence spans 87 residues: Large ribosomal subunit protein eL31 (87 aa).

This sequence belongs to the eukaryotic ribosomal protein eL31 family.

This is Large ribosomal subunit protein eL31 from Methanocorpusculum labreanum (strain ATCC 43576 / DSM 4855 / Z).